A 382-amino-acid polypeptide reads, in one-letter code: Protein RecA (382 aa).

79–86 is an ATP binding site; the sequence is GPESSGKT.

The protein belongs to the RecA family.

It is found in the cytoplasm. In terms of biological role, can catalyze the hydrolysis of ATP in the presence of single-stranded DNA, the ATP-dependent uptake of single-stranded DNA by duplex DNA, and the ATP-dependent hybridization of homologous single-stranded DNAs. It interacts with LexA causing its activation and leading to its autocatalytic cleavage. The chain is Protein RecA from Streptococcus sanguinis (strain SK36).